We begin with the raw amino-acid sequence, 780 residues long: Oocyte zinc finger protein XlCOF8.4 (780 aa).

C2H2-type zinc fingers lie at residues 250-272 (FPCSECGKCFAGSSELNVHRRTH), 278-300 (FSCSQCGKCFSNQTKLKYHHRTH), 306-328 (FSCSECGKCFSTPHVRARHQKTH), 334-356 (FPCSECGKCFARSSDVTVHRRTH), 362-384 (YSCSQCGKCFTRSSDLNVHRRTH), 390-412 (YSCSHCGKCFTTSSELNVHRRTH), 418-440 (YSCSECGKSFPTSSEFTSHWKTH), 446-468 (FSCVQCGKCFSKDTHLKYHYRTH), 474-496 (FSCFECGKCFTHNGSLKVHLKIH), 618-640 (LSCSECGKCFSTYHVLARHQKTH), 646-668 (FSCSECEKCYARSSDLNVHRRTH), 674-696 (YSCSECGKCFTRSSDFNVHRRTH), 702-724 (YSCSECGRCFPTSSVLTSHWRTH), 730-752 (FSCTECGKCFSRETYLKYHHRTH), and 758-780 (FSCSECGKCFTCNSSLKVHFQLH).

The protein belongs to the krueppel C2H2-type zinc-finger protein family.

The protein localises to the nucleus. In terms of biological role, may be involved in transcriptional regulation. The polypeptide is Oocyte zinc finger protein XlCOF8.4 (Xenopus laevis (African clawed frog)).